The chain runs to 485 residues: Adenosylhomocysteinase (485 aa).

Substrate is bound by residues Thr-60, Asp-146, and Glu-208. 209 to 211 (TTT) serves as a coordination point for NAD(+). 2 residues coordinate substrate: Lys-238 and Asp-242. NAD(+) is bound by residues Asn-243, 272–277 (GYGDVG), Glu-295, Asn-330, 351–353 (IGH), and Asn-399.

It belongs to the adenosylhomocysteinase family. It depends on NAD(+) as a cofactor.

Its subcellular location is the cytoplasm. The enzyme catalyses S-adenosyl-L-homocysteine + H2O = L-homocysteine + adenosine. It participates in amino-acid biosynthesis; L-homocysteine biosynthesis; L-homocysteine from S-adenosyl-L-homocysteine: step 1/1. In terms of biological role, may play a key role in the regulation of the intracellular concentration of adenosylhomocysteine. This chain is Adenosylhomocysteinase, found in Streptomyces avermitilis (strain ATCC 31267 / DSM 46492 / JCM 5070 / NBRC 14893 / NCIMB 12804 / NRRL 8165 / MA-4680).